Reading from the N-terminus, the 465-residue chain is Lactaldehyde dehydrogenase (465 aa).

An NAD(+)-binding site is contributed by 220–225 (GSVEVG). Catalysis depends on residues Glu-240 and Cys-274.

Belongs to the aldehyde dehydrogenase family. As to quaternary structure, homotetramer.

It catalyses the reaction (S)-lactaldehyde + NAD(+) + H2O = (S)-lactate + NADH + 2 H(+). It functions in the pathway cofactor biosynthesis; coenzyme F420 biosynthesis. Functionally, involved in F420 biosynthesis through the oxidation of lactaldehyde to lactate. The sequence is that of Lactaldehyde dehydrogenase from Methanococcus maripaludis (strain C5 / ATCC BAA-1333).